A 79-amino-acid polypeptide reads, in one-letter code: Small ribosomal subunit protein bS18 (79 aa).

It belongs to the bacterial ribosomal protein bS18 family. In terms of assembly, part of the 30S ribosomal subunit. Forms a tight heterodimer with protein bS6.

Binds as a heterodimer with protein bS6 to the central domain of the 16S rRNA, where it helps stabilize the platform of the 30S subunit. The polypeptide is Small ribosomal subunit protein bS18 (Nitrobacter hamburgensis (strain DSM 10229 / NCIMB 13809 / X14)).